A 103-amino-acid polypeptide reads, in one-letter code: UPF0145 protein EF_0241 (103 aa).

The protein belongs to the UPF0145 family.

The chain is UPF0145 protein EF_0241 from Enterococcus faecalis (strain ATCC 700802 / V583).